The primary structure comprises 335 residues: tRNA N6-adenosine threonylcarbamoyltransferase (335 aa).

A divalent metal cation-binding residues include histidine 109, histidine 113, and tyrosine 130. Residues 130 to 134 (YVSGG), aspartate 162, glycine 177, glutamate 181, and asparagine 266 each bind substrate. Aspartate 294 lines the a divalent metal cation pocket.

The protein belongs to the KAE1 / TsaD family. As to quaternary structure, component of the EKC/KEOPS complex composed of at least tp53rk, tprkb, osgep and lage3; the whole complex dimerizes. Requires a divalent metal cation as cofactor.

The protein resides in the cytoplasm. The protein localises to the nucleus. It catalyses the reaction L-threonylcarbamoyladenylate + adenosine(37) in tRNA = N(6)-L-threonylcarbamoyladenosine(37) in tRNA + AMP + H(+). In terms of biological role, component of the EKC/KEOPS complex that is required for the formation of a threonylcarbamoyl group on adenosine at position 37 (t(6)A37) in tRNAs that read codons beginning with adenine. The complex is probably involved in the transfer of the threonylcarbamoyl moiety of threonylcarbamoyl-AMP (TC-AMP) to the N6 group of A37. OSGEP likely plays a direct catalytic role in this reaction, but requires other protein(s) of the complex to fulfill this activity. In Danio rerio (Zebrafish), this protein is tRNA N6-adenosine threonylcarbamoyltransferase.